Reading from the N-terminus, the 272-residue chain is Ribosomal RNA small subunit methyltransferase A (272 aa).

S-adenosyl-L-methionine-binding residues include Asn-16, Leu-18, Gly-43, Glu-64, Asp-89, and Asn-110.

It belongs to the class I-like SAM-binding methyltransferase superfamily. rRNA adenine N(6)-methyltransferase family. RsmA subfamily.

It localises to the cytoplasm. The enzyme catalyses adenosine(1518)/adenosine(1519) in 16S rRNA + 4 S-adenosyl-L-methionine = N(6)-dimethyladenosine(1518)/N(6)-dimethyladenosine(1519) in 16S rRNA + 4 S-adenosyl-L-homocysteine + 4 H(+). In terms of biological role, specifically dimethylates two adjacent adenosines (A1518 and A1519) in the loop of a conserved hairpin near the 3'-end of 16S rRNA in the 30S particle. May play a critical role in biogenesis of 30S subunits. The protein is Ribosomal RNA small subunit methyltransferase A of Pseudomonas fluorescens (strain Pf0-1).